A 1055-amino-acid chain; its full sequence is Error-prone DNA polymerase (1055 aa).

The protein belongs to the DNA polymerase type-C family. DnaE2 subfamily.

It is found in the cytoplasm. It carries out the reaction DNA(n) + a 2'-deoxyribonucleoside 5'-triphosphate = DNA(n+1) + diphosphate. In terms of biological role, DNA polymerase involved in damage-induced mutagenesis and translesion synthesis (TLS). It is not the major replicative DNA polymerase. This chain is Error-prone DNA polymerase, found in Corynebacterium glutamicum (strain ATCC 13032 / DSM 20300 / JCM 1318 / BCRC 11384 / CCUG 27702 / LMG 3730 / NBRC 12168 / NCIMB 10025 / NRRL B-2784 / 534).